Here is a 208-residue protein sequence, read N- to C-terminus: Imidazoleglycerol-phosphate dehydratase (208 aa).

It belongs to the imidazoleglycerol-phosphate dehydratase family.

It is found in the cytoplasm. The enzyme catalyses D-erythro-1-(imidazol-4-yl)glycerol 3-phosphate = 3-(imidazol-4-yl)-2-oxopropyl phosphate + H2O. Its pathway is amino-acid biosynthesis; L-histidine biosynthesis; L-histidine from 5-phospho-alpha-D-ribose 1-diphosphate: step 6/9. This is Imidazoleglycerol-phosphate dehydratase from Prochlorococcus marinus (strain MIT 9211).